Here is a 427-residue protein sequence, read N- to C-terminus: Glutamyl-tRNA reductase (427 aa).

Residues Thr49–Arg52, Ser101, Glu106–Gln108, and Gln112 each bind substrate. Catalysis depends on Cys50, which acts as the Nucleophile. Position 181–186 (Gly181–Ile186) interacts with NADP(+). Positions Phe407–Pro427 are disordered. Residues Val418–Pro427 show a composition bias toward basic and acidic residues.

It belongs to the glutamyl-tRNA reductase family. In terms of assembly, homodimer.

It carries out the reaction (S)-4-amino-5-oxopentanoate + tRNA(Glu) + NADP(+) = L-glutamyl-tRNA(Glu) + NADPH + H(+). Its pathway is porphyrin-containing compound metabolism; protoporphyrin-IX biosynthesis; 5-aminolevulinate from L-glutamyl-tRNA(Glu): step 1/2. In terms of biological role, catalyzes the NADPH-dependent reduction of glutamyl-tRNA(Glu) to glutamate 1-semialdehyde (GSA). The polypeptide is Glutamyl-tRNA reductase (Stenotrophomonas maltophilia (strain K279a)).